A 902-amino-acid polypeptide reads, in one-letter code: Ribonuclease E (902 aa).

Residues 39 to 119 (SNIYKGKITR…GTKGAALTTF (81 aa)) enclose the S1 motif domain. Mg(2+) contacts are provided by Asp303 and Asp346. The Zn(2+) site is built by Cys404 and Cys407. The tract at residues 404-407 (CPRC) is required for zinc-mediated homotetramerization and catalytic activity. The segment at 881-902 (GKNSAGVHSATNFSNSPVSKLK) is disordered. Residues 889-902 (SATNFSNSPVSKLK) are compositionally biased toward polar residues.

This sequence belongs to the RNase E/G family. RNase E subfamily. In terms of assembly, component of the RNA degradosome, which is a multiprotein complex involved in RNA processing and mRNA degradation. Within the RNA degradosome, RNase E assembles into a homotetramer formed by a dimer of dimers. Zn(2+) serves as cofactor. Requires Mg(2+) as cofactor.

The protein localises to the cytoplasm. It is found in the cell inner membrane. It carries out the reaction Endonucleolytic cleavage of single-stranded RNA in A- and U-rich regions.. In terms of biological role, endoribonuclease that plays a central role in RNA processing and decay. Required for the maturation of 5S and 16S rRNAs and the majority of tRNAs. Also involved in the degradation of most mRNAs. The chain is Ribonuclease E from Buchnera aphidicola subsp. Acyrthosiphon pisum (strain APS) (Acyrthosiphon pisum symbiotic bacterium).